The primary structure comprises 553 residues: uncharacterized protein (553 aa).

The signal sequence occupies residues 1–31 (MEDIMTSLLVATSRVVVTISLAYVPVKSAFA). S207 acts as the Acyl-ester intermediate in catalysis. C275 and C292 are joined by a disulfide. Residues D276, D279, V281, D283, and L285 each contribute to the Ca(2+) site. Catalysis depends on charge relay system residues D444 and H482. A disulfide bridge connects residues C528 and C550.

Belongs to the tannase family.

This is an uncharacterized protein from Agrobacterium fabrum (strain C58 / ATCC 33970) (Agrobacterium tumefaciens (strain C58)).